Here is a 1332-residue protein sequence, read N- to C-terminus: DEMETER-like protein 2 (1332 aa).

Residues Met1–Val23 show a composition bias toward basic and acidic residues. Disordered stretches follow at residues Met1–Gln29, Val137–Glu242, and Val280–Asp317. The span at Val137 to Leu153 shows a compositional bias: polar residues. Positions Ser223–Ala236 are enriched in low complexity. Residues Pro301–Gly312 are compositionally biased toward basic residues. The tract at residues Lys497 to Pro595 is DEMETER. A compositionally biased stretch (polar residues) spans His739–Gln753. Residues His739–Arg810 are disordered. The segment covering Lys763–Ser777 has biased composition (basic residues). The segment covering Lys787–Arg810 has biased composition (basic and acidic residues). 4 residues coordinate [4Fe-4S] cluster: Cys970, Cys977, Cys980, and Cys986.

This sequence belongs to the DNA glycosylase family. DEMETER subfamily. Requires [4Fe-4S] cluster as cofactor.

The protein localises to the nucleus. Potential transcriptional activator that may act by nicking the target promoter. Catalyzes the release of 5-methylcytosine (5-meC) from DNA by a glycosylase/lyase mechanism. The chain is DEMETER-like protein 2 (DML2) from Arabidopsis thaliana (Mouse-ear cress).